The sequence spans 94 residues: DNA-directed RNA polymerase subunit omega (94 aa).

Belongs to the RNA polymerase subunit omega family. The RNAP catalytic core consists of 2 alpha, 1 beta, 1 beta' and 1 omega subunit. When a sigma factor is associated with the core the holoenzyme is formed, which can initiate transcription.

It carries out the reaction RNA(n) + a ribonucleoside 5'-triphosphate = RNA(n+1) + diphosphate. In terms of biological role, promotes RNA polymerase assembly. Latches the N- and C-terminal regions of the beta' subunit thereby facilitating its interaction with the beta and alpha subunits. The polypeptide is DNA-directed RNA polymerase subunit omega (Bifidobacterium longum (strain DJO10A)).